The primary structure comprises 325 residues: MINVGIIGGSGYTAGELIRILMYHPKVNIDFVYSTTNAGKPLSVAHHDLMGDIEMNFTAEINPNVNVVFLCLGHGKSISFLKENQFASHTKIIDLGNDFRLNKDAHFEGKDFVYGLPEINKAEIKKTNYIANPGCFATAIQLALLPLAKHNLLNNDVHINATTGSTGAGVSLSETSHFSWRNNNMSHYKAFEHQHLGEIGESLVQLQDDFDSELLFIPNRGDFPRGIFATLYTLCDDSLEQLVAKYEEFYKNEPFVTVTTTNINMKQVVQTNKCIISLLKKGNRVLITSIIDNLTKGASGQAIQNMNLMFGLEETTGLHLKPSGF.

Cys135 is a catalytic residue.

This sequence belongs to the NAGSA dehydrogenase family. Type 1 subfamily.

It is found in the cytoplasm. The catalysed reaction is N-acetyl-L-glutamate 5-semialdehyde + phosphate + NADP(+) = N-acetyl-L-glutamyl 5-phosphate + NADPH + H(+). Its pathway is amino-acid biosynthesis; L-arginine biosynthesis; N(2)-acetyl-L-ornithine from L-glutamate: step 3/4. Its function is as follows. Catalyzes the NADPH-dependent reduction of N-acetyl-5-glutamyl phosphate to yield N-acetyl-L-glutamate 5-semialdehyde. This is N-acetyl-gamma-glutamyl-phosphate reductase from Flavobacterium johnsoniae (strain ATCC 17061 / DSM 2064 / JCM 8514 / BCRC 14874 / CCUG 350202 / NBRC 14942 / NCIMB 11054 / UW101) (Cytophaga johnsonae).